The primary structure comprises 854 residues: Valine--tRNA ligase (854 aa).

A 'HIGH' region motif is present at residues 46–56; it reads PTVSGDLHIGH. A 'KMSKS' region motif is present at residues 551–555; sequence KMSKS. Lys-554 serves as a coordination point for ATP.

It belongs to the class-I aminoacyl-tRNA synthetase family. ValS type 2 subfamily. In terms of assembly, monomer.

The protein resides in the cytoplasm. The catalysed reaction is tRNA(Val) + L-valine + ATP = L-valyl-tRNA(Val) + AMP + diphosphate. Its function is as follows. Catalyzes the attachment of valine to tRNA(Val). As ValRS can inadvertently accommodate and process structurally similar amino acids such as threonine, to avoid such errors, it has a 'posttransfer' editing activity that hydrolyzes mischarged Thr-tRNA(Val) in a tRNA-dependent manner. This chain is Valine--tRNA ligase, found in Orientia tsutsugamushi (strain Boryong) (Rickettsia tsutsugamushi).